Consider the following 318-residue polypeptide: Methionyl-tRNA formyltransferase (318 aa).

Residue 112–115 participates in (6S)-5,6,7,8-tetrahydrofolate binding; that stretch reads SILP.

This sequence belongs to the Fmt family.

The enzyme catalyses L-methionyl-tRNA(fMet) + (6R)-10-formyltetrahydrofolate = N-formyl-L-methionyl-tRNA(fMet) + (6S)-5,6,7,8-tetrahydrofolate + H(+). Its function is as follows. Attaches a formyl group to the free amino group of methionyl-tRNA(fMet). The formyl group appears to play a dual role in the initiator identity of N-formylmethionyl-tRNA by promoting its recognition by IF2 and preventing the misappropriation of this tRNA by the elongation apparatus. The protein is Methionyl-tRNA formyltransferase of Shewanella frigidimarina (strain NCIMB 400).